A 2485-amino-acid polypeptide reads, in one-letter code: Tyrosine-protein phosphatase non-receptor type 13 (2485 aa).

Residues 3–190 (VSLAEALEVR…SGTDQLSCNS (188 aa)) enclose the KIND domain. The tract at residues 186–220 (LSCNSEQKPDRSQAIRDRLRGKGLPTGRSSTSDVL) is disordered. Positions 192–205 (QKPDRSQAIRDRLR) are enriched in basic and acidic residues. Serine 240 is subject to Phosphoserine. The disordered stretch occupies residues 260 to 283 (SDNSGREDSENTFSPYQFKTSGPE). Residues 270-279 (NTFSPYQFKT) show a composition bias toward polar residues. Phosphoserine is present on residues serine 301 and serine 302. Residues 433 to 467 (RSEASKRFESSSGLPGVDETLSQGQSQRPSRQYET) are disordered. Over residues 452-465 (TLSQGQSQRPSRQY) the composition is skewed to polar residues. Residues 469–504 (FEGNLINQEIMLKRQEEELMQLQAKMALRQSRLSLY) are a coiled coil. Positions 572–872 (RKVNIMLLNG…YQHKFQLQMR (301 aa)) constitute an FERM domain. A phosphoserine mark is found at serine 890, serine 897, serine 908, serine 911, and serine 914. Disordered stretches follow at residues 947–975 (QNSSKEKNDKASWEEKPREMSKSYHDLSQ) and 995–1049 (TVAE…IEDP). Basic and acidic residues predominate over residues 950-971 (SKEKNDKASWEEKPREMSKSYH). The span at 1020 to 1032 (KLNNSKSVASLNR) shows a compositional bias: polar residues. A phosphoserine mark is found at serine 1029, serine 1033, and serine 1085. The span at 1033 to 1042 (SPERRKHESD) shows a compositional bias: basic and acidic residues. The PDZ 1 domain maps to 1093–1178 (LVNLKKDAKY…EDVTLVISQP (86 aa)). Disordered regions lie at residues 1227–1258 (HISENSFGPSGGLREGSLSSQDSRTESASLSQ) and 1273–1362 (TWQE…SPPK). 3 stretches are compositionally biased toward polar residues: residues 1243–1258 (SLSSQDSRTESASLSQ), 1273–1288 (TWQESQHGSPSPSVIS), and 1327–1359 (TYSSSQDHQTPKQESSSSVNTSNKMNFKTFSSS). PDZ domains follow at residues 1368–1452 (EVEL…LEKG) and 1501–1588 (EVKL…LCRP). Residues 1608–1630 (AQVLPNSSKDSSQPSCVEQSTSS) are compositionally biased toward polar residues. Disordered stretches follow at residues 1608 to 1665 (AQVL…DLVT) and 1715 to 1751 (PNKPEFEDSNPSPLPPDMAPGQSYQPQSESASSSSMD). Positions 1736-1749 (QSYQPQSESASSSS) are enriched in low complexity. PDZ domains are found at residues 1788 to 1868 (LITL…IGRV) and 1882 to 1965 (PDIT…ATRN). Residues 1971–1996 (PSSKRSAVSAPKSTKGNGSYSVGSCS) form a disordered region. Over residues 1973–1996 (SKRSAVSAPKSTKGNGSYSVGSCS) the composition is skewed to polar residues. Positions 2213–2467 (PSKELENLQE…IFCYQVILYV (255 aa)) constitute a Tyrosine-protein phosphatase domain. Residues aspartate 2378, 2408-2414 (CSAGIGR), and glutamine 2452 contribute to the substrate site. Catalysis depends on cysteine 2408, which acts as the Phosphocysteine intermediate. A substrate region spans residues 2408–2414 (CSAGIGR).

It belongs to the protein-tyrosine phosphatase family. Non-receptor class subfamily. Interacts (via the first PDZ domain) with PLEKHA1 and PLEKHA2. Interacts (via the second PDZ domain) with TNFRSF6 (Fas receptor) (via C-terminus). Interacts (via the second PDZ domain) with TRIP6 (via the third LIM domain and C-terminus). Interacts (via the third PDZ domain) with NGFR (via C-terminal SVP motif) and PKN2 (via C-terminus). Interacts (via the second or fourth PDZ domains) with PDLIM4 (via C-terminus only or via combined C-terminus and LIM domain, but not LIM domain only). Found in a complex with PDLIM4 and TRIP6. Interacts with PDLIM4; this interaction results in dephosphorylation of SRC 'Tyr-419' by this protein leading to its inactivation. Interacts with BRD7. Interacts with RAPGEF6. Interacts with ARHGAP29. Interacts with PIK3R2; dephosphorylates PIK3R2. Interacts with FBXL2. Interacts (via the FERM domain) with ENTR1. Found in a complex with ENTR1, PTPN13 and GIT1. Expressed in keratinocytes (at protein level). Present in most tissues with the exception of the liver and skeletal muscle. Most abundant in lung, kidney and fetal brain.

It is found in the cytoplasm. The protein resides in the cytoskeleton. The protein localises to the nucleus. Its subcellular location is the cell projection. It localises to the lamellipodium. It catalyses the reaction O-phospho-L-tyrosyl-[protein] + H2O = L-tyrosyl-[protein] + phosphate. Functionally, tyrosine phosphatase which negatively regulates FAS-induced apoptosis and NGFR-mediated pro-apoptotic signaling. May regulate phosphoinositide 3-kinase (PI3K) signaling through dephosphorylation of PIK3R2. This Homo sapiens (Human) protein is Tyrosine-protein phosphatase non-receptor type 13 (PTPN13).